The primary structure comprises 238 residues: Ribonuclease PH (238 aa).

Phosphate is bound by residues R86 and 124–126 (GTR).

This sequence belongs to the RNase PH family. In terms of assembly, homohexameric ring arranged as a trimer of dimers.

It carries out the reaction tRNA(n+1) + phosphate = tRNA(n) + a ribonucleoside 5'-diphosphate. In terms of biological role, phosphorolytic 3'-5' exoribonuclease that plays an important role in tRNA 3'-end maturation. Removes nucleotide residues following the 3'-CCA terminus of tRNAs; can also add nucleotides to the ends of RNA molecules by using nucleoside diphosphates as substrates, but this may not be physiologically important. Probably plays a role in initiation of 16S rRNA degradation (leading to ribosome degradation) during starvation. This Rhizobium rhizogenes (strain K84 / ATCC BAA-868) (Agrobacterium radiobacter) protein is Ribonuclease PH.